A 311-amino-acid polypeptide reads, in one-letter code: Probable cell division protein WhiA (311 aa).

The segment at residues 274–308 is a DNA-binding region (H-T-H motif); the sequence is SLKELGEMIPSGAISKSGINHRIRKINEFAEKLRE.

Belongs to the WhiA family.

Involved in cell division and chromosome segregation. The sequence is that of Probable cell division protein WhiA from Enterococcus faecalis (strain ATCC 700802 / V583).